The sequence spans 415 residues: G patch domain-containing protein 4 (415 aa).

Met-1 carries the N-acetylmethionine modification. Thr-4 carries the phosphothreonine modification. The G-patch domain occupies 11-57 (GMKFAEEQLLKHGWTQGKGLGRRENGITQALKVTLKQDNHGVGHDPA). Residue Lys-46 forms a Glycyl lysine isopeptide (Lys-Gly) (interchain with G-Cter in SUMO2) linkage. Thr-116 bears the Phosphothreonine mark. Disordered stretches follow at residues 116–141 (TSGE…TPPK) and 191–415 (LGTS…VDLS). Residues 118–141 (GEEKPDRDLGNCSDVDNHEPTPPK) show a composition bias toward basic and acidic residues. The residue at position 130 (Ser-130) is a Phosphoserine. The span at 191–201 (LGTSQPLTDSE) shows a compositional bias: polar residues. Basic and acidic residues predominate over residues 224–239 (SLGDELLGHTDRSFRD). Position 258 is a phosphoserine (Ser-258). Positions 335 to 345 (EDLDTQEEEGK) are enriched in acidic residues. Basic residues predominate over residues 353–364 (RKVRRKDKRKRQ). The span at 387–397 (AGERSRQYPKE) shows a compositional bias: basic and acidic residues. Positions 398-407 (RAKKKKRKRD) are enriched in basic residues.

The chain is G patch domain-containing protein 4 (Gpatch4) from Mus musculus (Mouse).